A 417-amino-acid chain; its full sequence is Inactive GDSL esterase/lipase-like protein 25 (417 aa).

Positions 1–50 (MLLIPSFTANSNEPPPSKLSLSDLSMAILKSHFFLLFPLLLLHFHTVSFA) are cleaved as a signal peptide. Residues N160, N308, and N311 are each glycosylated (N-linked (GlcNAc...) asparagine). Residue H331 is part of the active site.

Belongs to the 'GDSL' lipolytic enzyme family. Interacts with the PYK10 complex and TGG2, but not with TGG1 or PEN2. Expressed throughout the seedling, rosette leaves, roots, inflorescence and imbibed seed, but not in pollen.

It localises to the vacuole. The protein localises to the endoplasmic reticulum. Its function is as follows. Involved in organization of the endomembrane system and is required for endoplasmic reticulum morphology and organelle distribution. May act by inhibiting the formation of PYK10 complex by binding to GLL23 and exporting it from the ER. Required for proper subcellular localization of myrosinase TGG2. Has no lipase or esterase activity. This is Inactive GDSL esterase/lipase-like protein 25 (MVP1) from Arabidopsis thaliana (Mouse-ear cress).